Reading from the N-terminus, the 382-residue chain is SAT4 family membrane protein (382 aa).

Positions 1-22 (MFGAELVGRETGGQSTDQPYSY) are disordered. A glycan (N-linked (GlcNAc...) asparagine) is linked at Asn-78. Helical transmembrane passes span 80–100 (SQILYAPLIFVTKLSIFLLYL) and 112–132 (YLSIHLLIWFNLAFYLANFFL). Asn-147 is a glycosylation site (N-linked (GlcNAc...) asparagine). Transmembrane regions (helical) follow at residues 159-179 (ILVTAAINVVSDLLMLCLPII), 192-212 (LGISAIFAAGIFGCFASIMRL), and 228-248 (WYTEITCGILASCLPALPTFF). The N-linked (GlcNAc...) asparagine glycan is linked to Asn-269.

Belongs to the SAT4 family.

Its subcellular location is the membrane. This Emericella nidulans (strain FGSC A4 / ATCC 38163 / CBS 112.46 / NRRL 194 / M139) (Aspergillus nidulans) protein is SAT4 family membrane protein.